The primary structure comprises 218 residues: Ribose-5-phosphate isomerase A (218 aa).

Residues 28–31 (TGST), 81–84 (DGAD), and 94–97 (KGGG) each bind substrate. The active-site Proton acceptor is glutamate 103. Substrate is bound at residue lysine 121.

This sequence belongs to the ribose 5-phosphate isomerase family. In terms of assembly, homodimer.

It carries out the reaction aldehydo-D-ribose 5-phosphate = D-ribulose 5-phosphate. It functions in the pathway carbohydrate degradation; pentose phosphate pathway; D-ribose 5-phosphate from D-ribulose 5-phosphate (non-oxidative stage): step 1/1. Its function is as follows. Catalyzes the reversible conversion of ribose-5-phosphate to ribulose 5-phosphate. The chain is Ribose-5-phosphate isomerase A from Psychromonas ingrahamii (strain DSM 17664 / CCUG 51855 / 37).